The primary structure comprises 303 residues: Putative ring-cleaving dioxygenase MhqE (303 aa).

VOC domains lie at 5–129 (GLHH…IMED) and 150–266 (GMKG…IATD). Fe cation-binding residues include His-8, His-215, and Glu-262.

This sequence belongs to the extradiol ring-cleavage dioxygenase family. Fe(2+) is required as a cofactor.

The protein localises to the cytoplasm. Putative ring-cleavage dioxygenase that may contribute to the degradation of aromatic compounds. This chain is Putative ring-cleaving dioxygenase MhqE (mhqE), found in Bacillus subtilis (strain 168).